We begin with the raw amino-acid sequence, 163 residues long: Cytochrome b6-f complex subunit 4 (163 aa).

The next 3 helical transmembrane spans lie at 36–56, 95–115, and 131–151; these read LLYIFPVVILGTIACNVGLAV, LLGVLLMVSVPLGLLTVPFLE, and TVFLIGTAVALWLGIGATLPI.

The protein belongs to the cytochrome b family. PetD subfamily. As to quaternary structure, the 4 large subunits of the cytochrome b6-f complex are cytochrome b6, subunit IV (17 kDa polypeptide, petD), cytochrome f and the Rieske protein, while the 4 small subunits are petG, petL, petM and petN. The complex functions as a dimer.

The protein resides in the plastid. It is found in the chloroplast thylakoid membrane. Component of the cytochrome b6-f complex, which mediates electron transfer between photosystem II (PSII) and photosystem I (PSI), cyclic electron flow around PSI, and state transitions. This chain is Cytochrome b6-f complex subunit 4, found in Phalaenopsis aphrodite subsp. formosana (Moth orchid).